The sequence spans 234 residues: Fibrillarin-like rRNA/tRNA 2'-O-methyltransferase (234 aa).

Residues 91-92 (TT), 110-111 (EF), 137-138 (DA), and 157-160 (DVAQ) each bind S-adenosyl-L-methionine.

This sequence belongs to the methyltransferase superfamily. Fibrillarin family. As to quaternary structure, interacts with nop5. Component of box C/D small ribonucleoprotein (sRNP) particles that contain rpl7ae, FlpA and nop5, plus a guide RNA.

Functionally, involved in pre-rRNA and tRNA processing. Utilizes the methyl donor S-adenosyl-L-methionine to catalyze the site-specific 2'-hydroxyl methylation of ribose moieties in rRNA and tRNA. Site specificity is provided by a guide RNA that base pairs with the substrate. Methylation occurs at a characteristic distance from the sequence involved in base pairing with the guide RNA. This is Fibrillarin-like rRNA/tRNA 2'-O-methyltransferase from Pyrobaculum calidifontis (strain DSM 21063 / JCM 11548 / VA1).